The chain runs to 363 residues: tRNA N6-adenosine threonylcarbamoyltransferase (363 aa).

Histidine 121 and histidine 125 together coordinate Fe cation. Residues 143–147 (LASGG), aspartate 176, glycine 189, and asparagine 287 each bind substrate. Position 315 (aspartate 315) interacts with Fe cation.

It belongs to the KAE1 / TsaD family. Fe(2+) serves as cofactor.

The protein localises to the cytoplasm. The enzyme catalyses L-threonylcarbamoyladenylate + adenosine(37) in tRNA = N(6)-L-threonylcarbamoyladenosine(37) in tRNA + AMP + H(+). Required for the formation of a threonylcarbamoyl group on adenosine at position 37 (t(6)A37) in tRNAs that read codons beginning with adenine. Is involved in the transfer of the threonylcarbamoyl moiety of threonylcarbamoyl-AMP (TC-AMP) to the N6 group of A37, together with TsaE and TsaB. TsaD likely plays a direct catalytic role in this reaction. The sequence is that of tRNA N6-adenosine threonylcarbamoyltransferase from Rhodopseudomonas palustris (strain BisB5).